A 184-amino-acid chain; its full sequence is MVHGNDVLHHNHFRKKWQFMVKTWFNQPARKERRRQARKAKAQRIAPRPASGPLRPIVNCPTFRYNMKVRSGRGFSLQEVRAAGLNPKFARTIGIAVDHRRRNVSVEGLQRNVARLKAYKAKLILFPLNPAKPQAMDAKADEVKKATQLRRPVLPITQRAKRLKAHKPTSSELRYSAFHAIRQQ.

Residues 28 to 53 (PARKERRRQARKAKAQRIAPRPASGP) form a disordered region. The span at 31–42 (KERRRQARKAKA) shows a compositional bias: basic residues.

This sequence belongs to the eukaryotic ribosomal protein eL13 family.

This is Large ribosomal subunit protein eL13 (RPL13) from Schistosoma mansoni (Blood fluke).